Here is a 166-residue protein sequence, read N- to C-terminus: Deglycase TK1284 (166 aa).

The 166-residue stretch at 1-166 folds into the PfpI endopeptidase domain; it reads MKVLILSADG…WMREFVKLLR (166 aa). Residue histidine 101 is part of the active site.

The protein belongs to the peptidase C56 family. As to quaternary structure, homohexamer formed by a dimer of trimers that assemble into a hollow ring structure.

The protein localises to the cytoplasm. It catalyses the reaction N(omega)-(1-hydroxy-2-oxopropyl)-L-arginyl-[protein] + H2O = lactate + L-arginyl-[protein] + H(+). It carries out the reaction N(6)-(1-hydroxy-2-oxopropyl)-L-lysyl-[protein] + H2O = lactate + L-lysyl-[protein] + H(+). The catalysed reaction is S-(1-hydroxy-2-oxopropyl)-L-cysteinyl-[protein] + H2O = lactate + L-cysteinyl-[protein] + H(+). The enzyme catalyses N(omega)-(1-hydroxy-2-oxoethyl)-L-arginyl-[protein] + H2O = L-arginyl-[protein] + glycolate + H(+). It catalyses the reaction N(6)-(1-hydroxy-2-oxoethyl)-L-lysyl-[protein] + H2O = glycolate + L-lysyl-[protein] + H(+). It carries out the reaction S-(1-hydroxy-2-oxoethyl)-L-cysteinyl-[protein] + H2O = glycolate + L-cysteinyl-[protein] + H(+). Deglycase that catalyzes the deglycation of the Maillard adducts formed between amino groups of proteins and reactive carbonyl groups of glyoxals. Thus, functions as a protein deglycase that repairs methylglyoxal- and glyoxal-glycated proteins, and releases repaired proteins and lactate or glycolate, respectively. Deglycates cysteine, arginine and lysine residues in proteins, and thus reactivates these proteins by reversing glycation by glyoxals. Acts on early glycation intermediates (hemithioacetals and aminocarbinols), preventing the formation of advanced glycation endproducts (AGE) that cause irreversible damage. Also displays proteolytic activity. This chain is Deglycase TK1284, found in Thermococcus kodakarensis (strain ATCC BAA-918 / JCM 12380 / KOD1) (Pyrococcus kodakaraensis (strain KOD1)).